Here is a 134-residue protein sequence, read N- to C-terminus: ATP synthase epsilon chain (134 aa).

The protein belongs to the ATPase epsilon chain family. As to quaternary structure, F-type ATPases have 2 components, CF(1) - the catalytic core - and CF(0) - the membrane proton channel. CF(1) has five subunits: alpha(3), beta(3), gamma(1), delta(1), epsilon(1). CF(0) has three main subunits: a, b and c.

It is found in the cell inner membrane. Functionally, produces ATP from ADP in the presence of a proton gradient across the membrane. This Nitratidesulfovibrio vulgaris (strain ATCC 29579 / DSM 644 / CCUG 34227 / NCIMB 8303 / VKM B-1760 / Hildenborough) (Desulfovibrio vulgaris) protein is ATP synthase epsilon chain.